Consider the following 117-residue polypeptide: MKVLVIFAVLSLVIFSNCSAETDEDFFGEESFEADDIIPFIAKEQVRSDCTLRNHDCTDDRHSCCRSKMFKDVCTCFYPSQRSETARAKKELCTCQQPKHLKYIEKGLQKAKDYATG.

A signal peptide spans 1–20; the sequence is MKVLVIFAVLSLVIFSNCSA. The propeptide occupies 21–47; it reads ETDEDFFGEESFEADDIIPFIAKEQVR. 4 cysteine pairs are disulfide-bonded: cysteine 50/cysteine 65, cysteine 57/cysteine 74, cysteine 64/cysteine 95, and cysteine 76/cysteine 93. A propeptide spanning residues 82–87 is cleaved from the precursor; that stretch reads RSETAR. Threonine 116 carries the post-translational modification Threonine amide.

It belongs to the neurotoxin 19 (CSTX) family. 12 subfamily. As to quaternary structure, heterodimer of A and B chains; disulfide-linked. Interacts with CSTX-1 (AC P81694) (Kd=430 nM), and with CSTX-9 (AC P58604) (Kd=370 nM). As to expression, expressed by the venom gland.

It is found in the secreted. It localises to the target cell membrane. In terms of biological role, synergistic toxin that induces or increases a cytolytic effect when combined with CSTX-1 (AC P81694) or CSTX-9 (AC P58604). When alone, has a weak insecticidal activity, with an unknown molecular target. The chain is Neurotoxic enhancer CSTX-13 from Cupiennius salei (American wandering spider).